Consider the following 405-residue polypeptide: Potassium channel subfamily K member 13 (405 aa).

At 1–19 (MAGRGCSCSPGHLNEDNAR) the chain is on the cytoplasmic side. The helical transmembrane segment at 20–40 (FLLLAGLILLYLLGGAAVFSA) threads the bilayer. Residues Asn-59 and Asn-65 are each glycosylated (N-linked (GlcNAc...) asparagine). The segment at residues 95-115 (WDFTGAFYFVGTVVTTIGFGM) is an intramembrane region (pore-forming). Residues Thr-110, Ile-111, and Gly-112 each coordinate K(+). The tract at residues 110 to 115 (TIGFGM) is selectivity filter 1. The chain crosses the membrane as a helical span at residues 125–145 (VFLIFYGLIGCASTILFFNLF). The Cytoplasmic segment spans residues 146–193 (LERLITVIAYVMRTCHHQQLRRRGTVARDNRKAPRKGEADSLAGWKPS). Residues 194-214 (VYYVMLILCLASVAISCGASA) traverse the membrane as a helical segment. The pore-forming intramembrane region spans 224 to 244 (YFDSVYFCFVASSTIGFGDLV). Thr-237, Ile-238, Gly-239, and Phe-240 together coordinate K(+). A selectivity filter 2 region spans residues 237-242 (TIGFGD). The helical transmembrane segment at 263-283 (FFILMGVCCIYSMFNVISILI) threads the bilayer. Residues 284–405 (KQTVNWILRK…NRLAETSGDR (122 aa)) lie on the Cytoplasmic side of the membrane.

It belongs to the two pore domain potassium channel (TC 1.A.1.8) family. In terms of assembly, homodimer. Heterodimer with KCNK12. As to expression, ubiquitous. In brain expression is rather low and restricted to the olfactory bulb and tubercle, to the ventromedial hypothalamic nucleus, lateral septal nucleus dorsal, lateral mammillary nucleus, lateral parabrachial nuclei, reticular nucleus and reunions nuclei.

It is found in the cell membrane. It carries out the reaction K(+)(in) = K(+)(out). The channel currents are activated by arachidonic acid, inhibited by volatile anesthetic halothane, partially inhibited by Ba(2+) ions and only weakly inhibited by extracellular acidification to pH 6. Functionally, k(+) channel that conducts outward rectifying tonic currents potentiated by purinergic signals. Homo- and heterodimerizes to form functional channels with distinct regulatory and gating properties. Contributes most of K(+) currents at the plasma membrane of resting microglia. Maintains a depolarized membrane potential required for proper ramified microglia morphology and phagocytosis, selectively mediating microglial pruning of presynaptic compartments at hippocampal excitatory synapses. Upon local release of ATP caused by neuronal injury or infection, it is potentiated by P2RY12 and P2RX7 receptor signaling and contributes to ATP-triggered K(+) efflux underlying microglial NLRP3 inflammasome assembly and IL1B release. The polypeptide is Potassium channel subfamily K member 13 (Rattus norvegicus (Rat)).